The primary structure comprises 183 residues: Threonylcarbamoyl-AMP synthase (183 aa).

In terms of domain architecture, YrdC-like spans 1–183 (MNIQQIVEQL…LFTHQLFRQG (183 aa)).

The protein belongs to the SUA5 family. TsaC subfamily.

It is found in the cytoplasm. It catalyses the reaction L-threonine + hydrogencarbonate + ATP = L-threonylcarbamoyladenylate + diphosphate + H2O. Required for the formation of a threonylcarbamoyl group on adenosine at position 37 (t(6)A37) in tRNAs that read codons beginning with adenine. Catalyzes the conversion of L-threonine, HCO(3)(-)/CO(2) and ATP to give threonylcarbamoyl-AMP (TC-AMP) as the acyladenylate intermediate, with the release of diphosphate. The sequence is that of Threonylcarbamoyl-AMP synthase from Pasteurella multocida (strain Pm70).